The primary structure comprises 350 residues: Anthranilate phosphoribosyltransferase (350 aa).

Residues Gly-94, 97 to 98, Thr-102, 104 to 107, 122 to 130, and Ser-134 contribute to the 5-phospho-alpha-D-ribose 1-diphosphate site; these read GS, NVST, and KHGNRSVSS. Gly-94 lines the anthranilate pocket. Ser-106 contributes to the Mg(2+) binding site. Asn-125 is an anthranilate binding site. Position 180 (Arg-180) interacts with anthranilate. Mg(2+) contacts are provided by Asp-239 and Glu-240.

The protein belongs to the anthranilate phosphoribosyltransferase family. As to quaternary structure, homodimer. Mg(2+) serves as cofactor.

The enzyme catalyses N-(5-phospho-beta-D-ribosyl)anthranilate + diphosphate = 5-phospho-alpha-D-ribose 1-diphosphate + anthranilate. Its pathway is amino-acid biosynthesis; L-tryptophan biosynthesis; L-tryptophan from chorismate: step 2/5. Its function is as follows. Catalyzes the transfer of the phosphoribosyl group of 5-phosphorylribose-1-pyrophosphate (PRPP) to anthranilate to yield N-(5'-phosphoribosyl)-anthranilate (PRA). This Geotalea uraniireducens (strain Rf4) (Geobacter uraniireducens) protein is Anthranilate phosphoribosyltransferase.